The primary structure comprises 86 residues: Large ribosomal subunit protein bL27 (86 aa).

The segment at 1 to 24 is disordered; the sequence is MAHKKGTGSTRNGRDSNSKRLGVK.

It belongs to the bacterial ribosomal protein bL27 family.

The sequence is that of Large ribosomal subunit protein bL27 from Prochlorococcus marinus (strain AS9601).